Here is a 437-residue protein sequence, read N- to C-terminus: Proline--tRNA ligase (437 aa).

Belongs to the class-II aminoacyl-tRNA synthetase family. ProS type 2 subfamily. Homodimer.

The protein resides in the cytoplasm. It carries out the reaction tRNA(Pro) + L-proline + ATP = L-prolyl-tRNA(Pro) + AMP + diphosphate. In terms of biological role, catalyzes the attachment of proline to tRNA(Pro) in a two-step reaction: proline is first activated by ATP to form Pro-AMP and then transferred to the acceptor end of tRNA(Pro). This Rhizorhabdus wittichii (strain DSM 6014 / CCUG 31198 / JCM 15750 / NBRC 105917 / EY 4224 / RW1) (Sphingomonas wittichii) protein is Proline--tRNA ligase.